Consider the following 267-residue polypeptide: tRNA-cytidine(32) 2-sulfurtransferase 1 (267 aa).

Residues 42 to 47 (SGGKDS) carry the PP-loop motif motif. 3 residues coordinate [4Fe-4S] cluster: C117, C120, and C208.

It belongs to the TtcA family. As to quaternary structure, homodimer. The cofactor is Mg(2+). It depends on [4Fe-4S] cluster as a cofactor.

The protein localises to the cytoplasm. It carries out the reaction cytidine(32) in tRNA + S-sulfanyl-L-cysteinyl-[cysteine desulfurase] + AH2 + ATP = 2-thiocytidine(32) in tRNA + L-cysteinyl-[cysteine desulfurase] + A + AMP + diphosphate + H(+). The protein operates within tRNA modification. Functionally, catalyzes the ATP-dependent 2-thiolation of cytidine in position 32 of tRNA, to form 2-thiocytidine (s(2)C32). The sulfur atoms are provided by the cysteine/cysteine desulfurase (IscS) system. This Francisella tularensis subsp. tularensis (strain FSC 198) protein is tRNA-cytidine(32) 2-sulfurtransferase 1.